The sequence spans 171 residues: 6,7-dimethyl-8-ribityllumazine synthase (171 aa).

Residues Phe24, 58–60 (ALE), and 82–84 (AVI) contribute to the 5-amino-6-(D-ribitylamino)uracil site. 87–88 (ET) contributes to the (2S)-2-hydroxy-3-oxobutyl phosphate binding site. His90 serves as the catalytic Proton donor. Asn115 contacts 5-amino-6-(D-ribitylamino)uracil. Residue Arg129 participates in (2S)-2-hydroxy-3-oxobutyl phosphate binding. The disordered stretch occupies residues 150–171 (ALDQLGDDEDEEEDEDDEEERA). The segment covering 154–171 (LGDDEDEEEDEDDEEERA) has biased composition (acidic residues).

It belongs to the DMRL synthase family.

The enzyme catalyses (2S)-2-hydroxy-3-oxobutyl phosphate + 5-amino-6-(D-ribitylamino)uracil = 6,7-dimethyl-8-(1-D-ribityl)lumazine + phosphate + 2 H2O + H(+). It functions in the pathway cofactor biosynthesis; riboflavin biosynthesis; riboflavin from 2-hydroxy-3-oxobutyl phosphate and 5-amino-6-(D-ribitylamino)uracil: step 1/2. Functionally, catalyzes the formation of 6,7-dimethyl-8-ribityllumazine by condensation of 5-amino-6-(D-ribitylamino)uracil with 3,4-dihydroxy-2-butanone 4-phosphate. This is the penultimate step in the biosynthesis of riboflavin. In Burkholderia cenocepacia (strain HI2424), this protein is 6,7-dimethyl-8-ribityllumazine synthase.